The primary structure comprises 232 residues: 7-cyano-7-deazaguanine synthase (232 aa).

Residue 8-18 coordinates ATP; sequence LSGGLDSATVL. The Zn(2+) site is built by cysteine 188, cysteine 198, cysteine 201, and cysteine 204.

This sequence belongs to the QueC family. Zn(2+) is required as a cofactor.

It carries out the reaction 7-carboxy-7-deazaguanine + NH4(+) + ATP = 7-cyano-7-deazaguanine + ADP + phosphate + H2O + H(+). Its pathway is purine metabolism; 7-cyano-7-deazaguanine biosynthesis. In terms of biological role, catalyzes the ATP-dependent conversion of 7-carboxy-7-deazaguanine (CDG) to 7-cyano-7-deazaguanine (preQ(0)). This Nitrosospira multiformis (strain ATCC 25196 / NCIMB 11849 / C 71) protein is 7-cyano-7-deazaguanine synthase.